The following is a 33-amino-acid chain: Defensin-1 (33 aa).

3 cysteine pairs are disulfide-bonded: Cys4-Cys32, Cys6-Cys21, and Cys11-Cys31.

This sequence belongs to the alpha-defensin family.

The protein localises to the secreted. Functionally, has antibacterial activity against the Gram-negative bacterium E.coli and the Gram-positive bacteria L.monocytogenes and S.aureus. Has antifungal activity against C.albicans. This Papio hamadryas (Hamadryas baboon) protein is Defensin-1.